We begin with the raw amino-acid sequence, 164 residues long: PTS system sorbose-specific EIIB component (164 aa).

One can recognise a PTS EIIB type-4 domain in the interval 1–164 (MIITLARVDD…AKIDEVFGKE (164 aa)). The active-site Pros-phosphohistidine intermediate is His14. His14 is subject to Phosphohistidine; by EIIA.

It localises to the cytoplasm. The catalysed reaction is keto-L-sorbose(out) + N(pros)-phospho-L-histidyl-[protein] = L-sorbose 1-phosphate(in) + L-histidyl-[protein]. Functionally, the phosphoenolpyruvate-dependent sugar phosphotransferase system (PTS), a major carbohydrate active transport system, catalyzes the phosphorylation of incoming sugar substrates concomitant with their translocation across the cell membrane. The enzyme II SorABCD PTS system is involved in L-sorbose transport. The sequence is that of PTS system sorbose-specific EIIB component from Lacticaseibacillus casei (Lactobacillus casei).